The chain runs to 215 residues: MYGINQRYLYISFHFFVVWCHAQGEKNHPSPNFKQYVREQGSLTDQLSRRQVRVYQLYSRTSGKHVQIRGHRVSATADDGNSYARLYVETDTFGSRVRIKGAESGRYLCMNRRGKLVGKPNGRGRDCIFTEIVLENNYTALENARHEGWFVAFTRKGRPIRASKTRQNQREVHFIKRLHKGPQPFPNAEQPKHFEFISFPSTRRAKRNRKHQTAS.

The N-terminal stretch at 1-22 (MYGINQRYLYISFHFFVVWCHA) is a signal peptide. A glycan (N-linked (GlcNAc...) asparagine) is linked at N137.

This sequence belongs to the heparin-binding growth factors family.

It is found in the secreted. Its function is as follows. Involved in dorsal-ventral embryonic patterning, by promoting expression of bone morphogenetic protein (BMP) antagonists such as chd. Also involved in anterior-posterior neural patterning and in mesoderm induction. This Danio rerio (Zebrafish) protein is Fibroblast growth factor 17 (fgf17).